The primary structure comprises 728 residues: Microtubule-associated protein VP5 (728 aa).

Belongs to the reoviridae microtubule-associated protein family.

It is found in the virion. The protein resides in the host cytoplasm. Its subcellular location is the host cytoskeleton. Functionally, minor inner capsid component. Displays NTPase and RNA 5'-triphosphatase (RTPase) activities. May function as a cofactor of polymerase. Associates with microtubules and plays a role in the formation, structural organization and morphology of viral inclusions, where the assembly of cores and the replication of viral RNA occur. This is Microtubule-associated protein VP5 (S5) from Ctenopharyngodon idella (Grass carp).